Here is a 301-residue protein sequence, read N- to C-terminus: Acetyl-coenzyme A carboxylase carboxyl transferase subunit beta (301 aa).

In terms of domain architecture, CoA carboxyltransferase N-terminal spans 29–298 (LWVKCPETGQ…AEPAEEEAEP (270 aa)).

The protein belongs to the AccD/PCCB family. As to quaternary structure, acetyl-CoA carboxylase is a heterohexamer composed of biotin carboxyl carrier protein (AccB), biotin carboxylase (AccC) and two subunits each of ACCase subunit alpha (AccA) and ACCase subunit beta (AccD).

Its subcellular location is the cytoplasm. The enzyme catalyses N(6)-carboxybiotinyl-L-lysyl-[protein] + acetyl-CoA = N(6)-biotinyl-L-lysyl-[protein] + malonyl-CoA. The protein operates within lipid metabolism; malonyl-CoA biosynthesis; malonyl-CoA from acetyl-CoA: step 1/1. Functionally, component of the acetyl coenzyme A carboxylase (ACC) complex. Biotin carboxylase (BC) catalyzes the carboxylation of biotin on its carrier protein (BCCP) and then the CO(2) group is transferred by the transcarboxylase to acetyl-CoA to form malonyl-CoA. The sequence is that of Acetyl-coenzyme A carboxylase carboxyl transferase subunit beta from Methylobacterium nodulans (strain LMG 21967 / CNCM I-2342 / ORS 2060).